The following is a 46-amino-acid chain: Photosystem II reaction center protein Psb30 (46 aa).

The residue at position 1 (Met-1) is an N-formylmethionine. The Lumenal portion of the chain corresponds to 1–20 (MGIFNGIIEFLSNINFEVIA). A helical transmembrane segment spans residues 21–38 (QLTMIAMIGIAGPMIIFL). The Cytoplasmic segment spans residues 39–46 (LAVRRGNL).

The protein belongs to the Psb30/Ycf12 family. As to quaternary structure, PSII is composed of 1 copy each of membrane proteins PsbA, PsbB, PsbC, PsbD, PsbE, PsbF, PsbH, PsbI, PsbJ, PsbK, PsbL, PsbM, PsbT, PsbX, PsbY, PsbZ, Psb30/Ycf12, peripheral proteins PsbO, CyanoQ (PsbQ), PsbU, PsbV and a large number of cofactors. It forms dimeric complexes. Part of a photosystem II (PSII) assembly intermediate complex PSII-I; crystallized from a strain deleted of psbJ, it forms monomeric PSII before addition of the oxygen evolving complex. PSII-I includes 3 assembly factors not found in mature PSII (Psb27, Psb28 and Psb34). The cofactor is PSII binds multiple chlorophylls, carotenoids and specific lipids..

The protein localises to the cellular thylakoid membrane. Its function is as follows. A core subunit of photosystem II (PSII). PSII is a light-driven water plastoquinone oxidoreductase, using light energy to abstract electrons from H(2)O, generating a proton gradient subsequently used for ATP formation. Helps stabilize PSII. This is Photosystem II reaction center protein Psb30 from Thermosynechococcus vestitus (strain NIES-2133 / IAM M-273 / BP-1).